Reading from the N-terminus, the 270-residue chain is Thiamine thiazole synthase (270 aa).

Residues alanine 39, 58-59, glycine 66, and leucine 130 each bind NAD(+); that span reads EQ. The residue at position 159 (cysteine 159) is a 2,3-didehydroalanine (Cys). Aspartate 161 is an NAD(+) binding site. Residues aspartate 161 and histidine 176 each contribute to the Fe cation site. Isoleucine 223 lines the NAD(+) pocket. Arginine 233 is a binding site for glycine.

It belongs to the THI4 family. Homooctamer; tetramer of dimers. Fe(2+) is required as a cofactor. Post-translationally, during the catalytic reaction, a sulfide is transferred from Cys-159 to a reaction intermediate, generating a dehydroalanine residue.

It catalyses the reaction [ADP-thiazole synthase]-L-cysteine + glycine + NAD(+) = [ADP-thiazole synthase]-dehydroalanine + ADP-5-ethyl-4-methylthiazole-2-carboxylate + nicotinamide + 3 H2O + 2 H(+). Its pathway is cofactor biosynthesis; thiamine diphosphate biosynthesis. Functionally, involved in biosynthesis of the thiamine precursor thiazole. Catalyzes the conversion of NAD and glycine to adenosine diphosphate 5-(2-hydroxyethyl)-4-methylthiazole-2-carboxylic acid (ADT), an adenylated thiazole intermediate. The reaction includes an iron-dependent sulfide transfer from a conserved cysteine residue of the protein to a thiazole intermediate. The enzyme can only undergo a single turnover, which suggests it is a suicide enzyme. This chain is Thiamine thiazole synthase, found in Aeropyrum pernix (strain ATCC 700893 / DSM 11879 / JCM 9820 / NBRC 100138 / K1).